We begin with the raw amino-acid sequence, 412 residues long: MTSLTNAVFKRYLAVTPSAHQALKTRIKKKSSSFDKFFPQQSNSRKKQWETLNEDKASWFKRKYAHVHAREQDRAADPYGKKKAHVEKLKEIKNQAKLNQKSHKSKFQNKDIALKLMNDNPIFEYVYGTNSVYAALLNPSRNCHSRLLYHGTIPSKFLQIVDELKVTTELVDKHRLNLLTNYGVHNNIALETKPLQPVEIAYLGDMDTSSAALSIHELGFNNENIPHELPYGTKTDAKKFPLGLYLDEITDPHNIGAIIRSAYFLGVDFIVMSRRNCSPLTPVVSKTSSGALELLPIFYVDKPLEFFTKSQEMGGWTFITSHLANATSEKYTVGKTISMHDLNGLCNELPVVLVVGNESQGVRTNLKMRSDFFVEIPFGGIEKGNRAPEPIVDSLNVSVATALLIDNILTCK.

Residues 1–20 (MTSLTNAVFKRYLAVTPSAH) constitute a mitochondrion transit peptide.

This sequence belongs to the class IV-like SAM-binding methyltransferase superfamily. RNA methyltransferase TrmH family.

It is found in the mitochondrion. It carries out the reaction guanosine(2270) in 21S rRNA + S-adenosyl-L-methionine = 2'-O-methylguanosine(2270) in 21S rRNA + S-adenosyl-L-homocysteine + H(+). Its function is as follows. S-adenosyl-L-methionine-dependent 2'-O-ribose methyltransferase that catalyzes the formation of 2'-O-methylguanosine at position 2270 (Gm2270) in the 21S mitochondrial large subunit ribosomal RNA (mtLSU rRNA), a universally conserved modification in the peptidyl transferase domain of the mtLSU rRNA. This modification seems to be important for the normal accumulation of the mitochondrial large ribosomal subunit. This Saccharomyces cerevisiae (strain ATCC 204508 / S288c) (Baker's yeast) protein is rRNA methyltransferase 1, mitochondrial.